The following is a 236-amino-acid chain: Apoptosis regulator Bcl-2 (236 aa).

Positions 10–30 match the BH4 motif; the sequence is DNREIVMKYIHYKLSQRGYEW. T69 carries the post-translational modification Phosphothreonine; by MAPK8. Phosphoserine; by MAPK8 and PKC is present on S70. Phosphoserine; by MAPK8 is present on S84. The short motif at 90–104 is the BH3 element; it reads VHLTLRRAGDDFSRR. Residues 133–152 carry the BH1 motif; the sequence is ELFRDGVNWGRIVAFFEFGG. A BH2 motif is present at residues 184–199; that stretch reads TWIQDNGGWDAFVELY. The helical transmembrane segment at 209 to 230 threads the bilayer; that stretch reads FSWLSLKALLSLALVGACITLG.

The protein belongs to the Bcl-2 family. In terms of assembly, forms homodimers, and heterodimers with BAX, BAD, BAK and Bcl-X(L). Heterodimerization with BAX requires intact BH1 and BH2 motifs, and is necessary for anti-apoptotic activity. Component of the complex, at least composed of LRPPRC, BECN1 and BCL2; the interactions prevent BECN1 from forming an autophagy-inducing complex with PIK3C3. Interacts with EI24. Also interacts with APAF1, BBC3, BCL2L1, BNIPL, MRPL41 and TP53BP2. Binding to FKBP8 seems to target BCL2 to the mitochondria and probably interferes with the binding of BCL2 to its targets. Interacts with BAG1 in an ATP-dependent manner. Interacts with RAF1 (the 'Ser-338' and 'Ser-339' phosphorylated form). Interacts (via the BH4 domain) with EGLN3; the interaction prevents the formation of the BAX-BCL2 complex and inhibits the anti-apoptotic activity of BCL2. Interacts with G0S2; this interaction also prevents the formation of the anti-apoptotic BAX-BCL2 complex. Interacts with RTL10/BOP. Interacts with the SCF(FBXO10) complex. Interacts (via the loop between motifs BH4 and BH3) with NLRP1 (via LRR repeats), but not with NLRP2, NLRP3, NLRP4, PYCARD, nor MEFV. Interacts with GIMAP3/IAN4, GIMAP4/IAN1 and GIMAP5/IAN5. Interacts with BCAP31. Interacts with IRF3; the interaction is inhibited by Sendai virus infection. Interacts with BECN1; thereby inhibiting autophagy in non-starvation conditions. Interacts with AMBRA1; thereby inhibiting autophagy. In terms of processing, phosphorylation/dephosphorylation on Ser-70 regulates anti-apoptotic activity. Growth factor-stimulated phosphorylation on Ser-70 by PKC is required for the anti-apoptosis activity and occurs during the G2/M phase of the cell cycle. In the absence of growth factors, BCL2 appears to be phosphorylated by other protein kinases such as ERKs and stress-activated kinases. Phosphorylated by MAPK8/JNK1 at Thr-69, Ser-70 and Ser-84, which stimulates starvation-induced autophagy. Dephosphorylated by protein phosphatase 2A (PP2A). Post-translationally, proteolytically cleaved by caspases during apoptosis. The cleaved protein, lacking the BH4 motif, has pro-apoptotic activity, causes the release of cytochrome c into the cytosol promoting further caspase activity. Monoubiquitinated by PRKN, leading to an increase in its stability. Ubiquitinated by SCF(FBXO10), leading to its degradation by the proteasome.

The protein localises to the mitochondrion outer membrane. It localises to the nucleus membrane. Its subcellular location is the endoplasmic reticulum membrane. The protein resides in the cytoplasm. In terms of biological role, suppresses apoptosis in a variety of cell systems including factor-dependent lymphohematopoietic and neural cells. Regulates cell death by controlling the mitochondrial membrane permeability. Appears to function in a feedback loop system with caspases. Inhibits caspase activity either by preventing the release of cytochrome c from the mitochondria and/or by binding to the apoptosis-activating factor (APAF-1). Also acts as an inhibitor of autophagy: interacts with BECN1 and AMBRA1 during non-starvation conditions and inhibits their autophagy function. May attenuate inflammation by impairing NLRP1-inflammasome activation, hence CASP1 activation and IL1B release. The polypeptide is Apoptosis regulator Bcl-2 (BCL2) (Canis lupus familiaris (Dog)).